The chain runs to 514 residues: Peptide chain release factor 3 (514 aa).

The tr-type G domain occupies 8–268 (KKRRTFAIIS…TFLEFAPEPH (261 aa)). GTP is bound by residues 17–24 (SHPDAGKT), 85–89 (DTPGH), and 139–142 (NKLD).

The protein belongs to the TRAFAC class translation factor GTPase superfamily. Classic translation factor GTPase family. PrfC subfamily.

The protein resides in the cytoplasm. Its function is as follows. Increases the formation of ribosomal termination complexes and stimulates activities of RF-1 and RF-2. It binds guanine nucleotides and has strong preference for UGA stop codons. It may interact directly with the ribosome. The stimulation of RF-1 and RF-2 is significantly reduced by GTP and GDP, but not by GMP. The protein is Peptide chain release factor 3 of Streptococcus pyogenes serotype M28 (strain MGAS6180).